The chain runs to 364 residues: Large ribosomal subunit protein uL22m (364 aa).

The protein belongs to the universal ribosomal protein uL22 family. Component of the mitochondrial large ribosomal subunit (mt-LSU). Mature N.crassa 74S mitochondrial ribosomes consist of a small (37S) and a large (54S) subunit. The 37S small subunit contains a 16S ribosomal RNA (16S mt-rRNA) and 32 different proteins. The 54S large subunit contains a 23S rRNA (23S mt-rRNA) and 42 different proteins. uL22m forms the wall of the exit tunnel.

It is found in the mitochondrion. Component of the mitochondrial ribosome (mitoribosome), a dedicated translation machinery responsible for the synthesis of mitochondrial genome-encoded proteins, including at least some of the essential transmembrane subunits of the mitochondrial respiratory chain. The mitoribosomes are attached to the mitochondrial inner membrane and translation products are cotranslationally integrated into the membrane. The polypeptide is Large ribosomal subunit protein uL22m (mrpl22) (Neurospora crassa (strain ATCC 24698 / 74-OR23-1A / CBS 708.71 / DSM 1257 / FGSC 987)).